We begin with the raw amino-acid sequence, 208 residues long: Truncated thymidylate kinase (208 aa).

This sequence belongs to the thymidylate kinase family.

Functionally, catalyzes the conversion of dTMP to dTDP. The protein is Truncated thymidylate kinase (TMK) of Ornithodoros (relapsing fever ticks).